The sequence spans 338 residues: MGSSSSKSSSSVTVASSIDYKAKPTIDELGTSNYSGGLEVSKNLLDFNLGEKPCPLKSVVQDQFTISNSSKTKLKFHFEPLQPKEFQLSFSPTSGSLDKGKSKTIKVKLMVNQKINTNHKVVLRVEGGASHFLTVKIRCETGVFGVDPNTLEHVEDEGFRVPYILALMKRSLIDNGGLQQEGIFRLAGEQTEIKRLKEAMNRNDFTSSTDINTVASLIKIWYRELPTPILNSIPTEKIFYSTDIDECVQSAKNLPEPQKSLLDWLMHLLLMVSSFSDVNKMTAQNLAIVVAPNLYDVSSSNPMEGLVLSQKCVQFLHNVLSHKVAVHKRESVAYEVLS.

The Rho-GAP domain occupies 149 to 327 (NTLEHVEDEG…NVLSHKVAVH (179 aa)).

The protein localises to the cytoplasm. Functionally, rho GTPase-activating protein involved in the signal transduction pathway. The polypeptide is Rho GTPase-activating protein gacA (gacA) (Dictyostelium discoideum (Social amoeba)).